The chain runs to 290 residues: GTPase Era (290 aa).

An Era-type G domain is found at 2 to 169; it reads KSGFAAILGR…KNKIYENFSE (168 aa). The G1 stretch occupies residues 10–17; the sequence is GRPSTGKS. GTP is bound at residue 10 to 17; it reads GRPSTGKS. The tract at residues 36 to 40 is G2; the sequence is QTTRN. The segment at 57–60 is G3; the sequence is DTPG. GTP-binding positions include 57-61 and 119-122; these read DTPGF and NKID. The tract at residues 119–122 is G4; that stretch reads NKID. The G5 stretch occupies residues 148–150; the sequence is ISA. The KH type-2 domain occupies 200–276; that stretch reads LKEELPYSLY…NLFLQVKLKK (77 aa).

It belongs to the TRAFAC class TrmE-Era-EngA-EngB-Septin-like GTPase superfamily. Era GTPase family. In terms of assembly, monomer.

The protein localises to the cytoplasm. The protein resides in the cell inner membrane. In terms of biological role, an essential GTPase that binds both GDP and GTP, with rapid nucleotide exchange. Plays a role in 16S rRNA processing and 30S ribosomal subunit biogenesis and possibly also in cell cycle regulation and energy metabolism. The chain is GTPase Era from Borreliella burgdorferi (strain ATCC 35210 / DSM 4680 / CIP 102532 / B31) (Borrelia burgdorferi).